The sequence spans 230 residues: Nicotinamide riboside kinase 2 (230 aa).

9–17 (GMTNGGKTT) is an ATP binding site. Mg(2+)-binding residues include threonine 16 and aspartate 35. The Proton acceptor role is filled by aspartate 35. Residues 35-38 (DDFF) and 54-55 (WD) each bind substrate. Arginine 130 contributes to the ATP binding site. Substrate contacts are provided by residues arginine 131 and 136-137 (YT). Residues 134–136 (RNY) and 174–176 (KSR) contribute to the ATP site. A disordered region spans residues 191-230 (LLNRSQESAPSPARPARTQGPGRGCGHRTARPAASQQDSM).

Belongs to the uridine kinase family. NRK subfamily. Monomer. Interacts with ITGB1 alone or when associated with alpha-7, but not with alpha-5. In terms of tissue distribution, predominantly expressed in skeletal muscle and, at a much lower level, in the heart (at protein level). No expression in brain, kidney, liver, lung, pancreas nor placenta.

The enzyme catalyses beta-nicotinamide D-riboside + ATP = beta-nicotinamide D-ribonucleotide + ADP + H(+). It catalyses the reaction beta-D-ribosylnicotinate + ATP = nicotinate beta-D-ribonucleotide + ADP + H(+). Its pathway is cofactor biosynthesis; NAD(+) biosynthesis. Functionally, catalyzes the phosphorylation of nicotinamide riboside (NR) and nicotinic acid riboside (NaR) to form nicotinamide mononucleotide (NMN) and nicotinic acid mononucleotide (NaMN). Reduces laminin matrix deposition and cell adhesion to laminin, but not to fibronectin. Involved in the regulation of PXN at the protein level and of PXN tyrosine phosphorylation. May play a role in the regulation of terminal myogenesis. In Homo sapiens (Human), this protein is Nicotinamide riboside kinase 2 (NMRK2).